Consider the following 293-residue polypeptide: N-acetylneuraminate lyase (293 aa).

Positions 48 and 49 each coordinate aceneuramate. The active-site Proton donor is Tyr-137. Catalysis depends on Lys-165, which acts as the Schiff-base intermediate with substrate. 5 residues coordinate aceneuramate: Thr-167, Gly-189, Asp-191, Glu-192, and Ser-208.

Belongs to the DapA family. NanA subfamily. Homotetramer.

It is found in the cytoplasm. It carries out the reaction aceneuramate = aldehydo-N-acetyl-D-mannosamine + pyruvate. The protein operates within amino-sugar metabolism; N-acetylneuraminate degradation; D-fructose 6-phosphate from N-acetylneuraminate: step 1/5. Catalyzes the reversible aldol cleavage of N-acetylneuraminic acid (sialic acid; Neu5Ac) to form pyruvate and N-acetylmannosamine (ManNAc) via a Schiff base intermediate. In Staphylococcus carnosus (strain TM300), this protein is N-acetylneuraminate lyase.